A 330-amino-acid polypeptide reads, in one-letter code: Polygalacturonase inhibitor (330 aa).

Positions 1–24 are cleaved as a signal peptide; sequence MELKFSTFLSLTLLFSSVLNPALS. 2 disulfides stabilise this stretch: Cys27-Cys57 and Cys58-Cys65. LRR repeat units follow at residues 69-92, 93-118, 119-141, 142-166, 167-192, 194-215, and 217-237; these read TNRINSLTIFAGQVSGQIPALVGD, LPYLETLEFHKQPNLTGPIQPAIAKL, KGLKSLRLSWTNLSGSVPDFLSQ, LKNLTFLDLSFNNLTGAIPSSLSEL, PNLGALRLDRNKLTGHIPISFGQFIG, VPDLYLSHNQLSGNIPTSFAQM, and FTSIDLSRNKLEGDASVIFGL. N-linked (GlcNAc...) asparagine glycosylation is found at Asn106, Asn130, Asn144, and Asn154. N-linked (GlcNAc...) asparagine glycans are attached at residues Asn238 and Asn254. LRR repeat units lie at residues 239–261, 262–285, and 287–309; these read KTTQIVDLSRNLLEFNLSKVEFP, TSLTSLDINHNKIYGSIPVEFTQL, and FQFLNVSYNRLCGQIPVGGKLQS. Residue Asn291 is glycosylated (N-linked (GlcNAc...) asparagine). Intrachain disulfides connect Cys298–Cys320 and Cys322–Cys329.

This sequence belongs to the polygalacturonase-inhibiting protein family. In terms of assembly, homodimer. N-linked glycosylated. As to expression, mostly expressed in fruits, and, to a lower extent, in flowers and leaves.

The protein resides in the secreted. The protein localises to the extracellular space. It localises to the apoplast. It is found in the cell wall. In terms of biological role, inhibitor of fungal polygalacturonase. It is an important factor for plant resistance to phytopathogenic fungi. The chain is Polygalacturonase inhibitor (PGIP) from Pyrus communis (Pear).